The following is a 332-amino-acid chain: Ferredoxin--NADP reductase (332 aa).

7 residues coordinate FAD: Glu35, Gln43, Tyr48, Val88, Phe122, Asp286, and Ser326.

The protein belongs to the ferredoxin--NADP reductase type 2 family. In terms of assembly, homodimer. FAD serves as cofactor.

The catalysed reaction is 2 reduced [2Fe-2S]-[ferredoxin] + NADP(+) + H(+) = 2 oxidized [2Fe-2S]-[ferredoxin] + NADPH. The sequence is that of Ferredoxin--NADP reductase from Limosilactobacillus reuteri (strain DSM 20016) (Lactobacillus reuteri).